Here is a 213-residue protein sequence, read N- to C-terminus: Guanylate kinase (213 aa).

In terms of domain architecture, Guanylate kinase-like spans 6 to 186 (GLLIILSSPS…TEERLKTIVS (181 aa)). 13 to 20 (SPSGAGKS) is an ATP binding site.

The protein belongs to the guanylate kinase family.

Its subcellular location is the cytoplasm. It carries out the reaction GMP + ATP = GDP + ADP. In terms of biological role, essential for recycling GMP and indirectly, cGMP. This chain is Guanylate kinase, found in Ruegeria pomeroyi (strain ATCC 700808 / DSM 15171 / DSS-3) (Silicibacter pomeroyi).